Reading from the N-terminus, the 76-residue chain is ATP synthase subunit c (76 aa).

Helical transmembrane passes span 13 to 33 (LSVI…GILF) and 55 to 75 (FIGL…ALII).

It belongs to the ATPase C chain family. F-type ATPases have 2 components, F(1) - the catalytic core - and F(0) - the membrane proton channel. F(1) has five subunits: alpha(3), beta(3), gamma(1), delta(1), epsilon(1). F(0) has three main subunits: a(1), b(2) and c(10-14). The alpha and beta chains form an alternating ring which encloses part of the gamma chain. F(1) is attached to F(0) by a central stalk formed by the gamma and epsilon chains, while a peripheral stalk is formed by the delta and b chains.

It is found in the cell membrane. In terms of biological role, f(1)F(0) ATP synthase produces ATP from ADP in the presence of a proton or sodium gradient. F-type ATPases consist of two structural domains, F(1) containing the extramembraneous catalytic core and F(0) containing the membrane proton channel, linked together by a central stalk and a peripheral stalk. During catalysis, ATP synthesis in the catalytic domain of F(1) is coupled via a rotary mechanism of the central stalk subunits to proton translocation. Its function is as follows. Key component of the F(0) channel; it plays a direct role in translocation across the membrane. A homomeric c-ring of between 10-14 subunits forms the central stalk rotor element with the F(1) delta and epsilon subunits. The polypeptide is ATP synthase subunit c (Bifidobacterium longum subsp. infantis (strain ATCC 15697 / DSM 20088 / JCM 1222 / NCTC 11817 / S12)).